The chain runs to 433 residues: tRNA-2-methylthio-N(6)-dimethylallyladenosine synthase (433 aa).

One can recognise an MTTase N-terminal domain in the interval 3–118; the sequence is KRLYIETLGC…IRDVIKQEKA (116 aa). Residues Cys-12, Cys-49, Cys-81, Cys-150, Cys-154, and Cys-157 each coordinate [4Fe-4S] cluster. The Radical SAM core domain occupies 136–371; it reads RTSPYKAFIN…LHLQMLDSIS (236 aa). The TRAM domain occupies 372–433; that stretch reads EQEKDKVYEV…RLSLEGELVG (62 aa).

The protein belongs to the methylthiotransferase family. MiaB subfamily. Monomer. The cofactor is [4Fe-4S] cluster.

It localises to the cytoplasm. It carries out the reaction N(6)-dimethylallyladenosine(37) in tRNA + (sulfur carrier)-SH + AH2 + 2 S-adenosyl-L-methionine = 2-methylsulfanyl-N(6)-dimethylallyladenosine(37) in tRNA + (sulfur carrier)-H + 5'-deoxyadenosine + L-methionine + A + S-adenosyl-L-homocysteine + 2 H(+). Catalyzes the methylthiolation of N6-(dimethylallyl)adenosine (i(6)A), leading to the formation of 2-methylthio-N6-(dimethylallyl)adenosine (ms(2)i(6)A) at position 37 in tRNAs that read codons beginning with uridine. The polypeptide is tRNA-2-methylthio-N(6)-dimethylallyladenosine synthase (Nitratiruptor sp. (strain SB155-2)).